Consider the following 280-residue polypeptide: 4-deoxy-L-threo-5-hexosulose-uronate ketol-isomerase (280 aa).

Zn(2+)-binding residues include histidine 198, histidine 200, glutamate 205, and histidine 247.

The protein belongs to the KduI family. The cofactor is Zn(2+).

It localises to the cytoplasm. The catalysed reaction is 5-dehydro-4-deoxy-D-glucuronate = 3-deoxy-D-glycero-2,5-hexodiulosonate. In terms of biological role, isomerase involved in ulvan degradation. Ulvan is the main polysaccharide component of the Ulvales (green seaweed) cell wall. It is composed of disaccharide building blocks comprising 3-sulfated rhamnose (Rha3S) linked to D-glucuronic acid (GlcA), L-iduronic acid (IduA), or D-xylose (Xyl). Catalyzes the isomerization of 5-dehydro-4-deoxy-D-glucuronate to 3-deoxy-D-glycero-2,5-hexodiulosonate. This chain is 4-deoxy-L-threo-5-hexosulose-uronate ketol-isomerase, found in Formosa agariphila (strain DSM 15362 / KCTC 12365 / LMG 23005 / KMM 3901 / M-2Alg 35-1).